Consider the following 360-residue polypeptide: Peptide chain release factor 1 (360 aa).

Gln-237 carries the N5-methylglutamine modification.

Belongs to the prokaryotic/mitochondrial release factor family. Post-translationally, methylated by PrmC. Methylation increases the termination efficiency of RF1.

The protein resides in the cytoplasm. In terms of biological role, peptide chain release factor 1 directs the termination of translation in response to the peptide chain termination codons UAG and UAA. This Saccharophagus degradans (strain 2-40 / ATCC 43961 / DSM 17024) protein is Peptide chain release factor 1.